The following is a 131-amino-acid chain: uncharacterized protein (131 aa).

This is an uncharacterized protein from Saccharomyces cerevisiae (strain ATCC 204508 / S288c) (Baker's yeast).